Reading from the N-terminus, the 205-residue chain is Small ribosomal subunit protein uS4 (205 aa).

The interval 18-49 (NIWGRPKSPVNKREYGPGQHGQRRKGKLSDFG) is disordered. In terms of domain architecture, S4 RNA-binding spans 94–157 (RRLDAIVYRA…KQLALVLEAN (64 aa)).

Belongs to the universal ribosomal protein uS4 family. In terms of assembly, part of the 30S ribosomal subunit. Contacts protein S5. The interaction surface between S4 and S5 is involved in control of translational fidelity.

One of the primary rRNA binding proteins, it binds directly to 16S rRNA where it nucleates assembly of the body of the 30S subunit. Functionally, with S5 and S12 plays an important role in translational accuracy. The protein is Small ribosomal subunit protein uS4 of Afipia carboxidovorans (strain ATCC 49405 / DSM 1227 / KCTC 32145 / OM5) (Oligotropha carboxidovorans).